An 86-amino-acid polypeptide reads, in one-letter code: RNA-binding protein Hfq (86 aa).

Residues 9–68 (DIFLNVLRRERIQVSIYLFNGIKLQGHIESFDQFVIVLKNTISQMVYKHAVSTIVPSKFV) enclose the Sm domain.

The protein belongs to the Hfq family. Homohexamer.

Its function is as follows. RNA chaperone that binds small regulatory RNA (sRNAs) and mRNAs to facilitate mRNA translational regulation in response to envelope stress, environmental stress and changes in metabolite concentrations. Also binds with high specificity to tRNAs. The protein is RNA-binding protein Hfq of Baumannia cicadellinicola subsp. Homalodisca coagulata.